A 241-amino-acid polypeptide reads, in one-letter code: Zinc finger CCHC domain-containing protein 24 (241 aa).

Residues serine 65 and serine 93 each carry the phosphoserine modification. The segment at 132-149 adopts a CCHC-type zinc-finger fold; the sequence is YLCHLCFNKGHYIKDCPQ.

In Homo sapiens (Human), this protein is Zinc finger CCHC domain-containing protein 24 (ZCCHC24).